The following is a 304-amino-acid chain: UDP-N-acetylenolpyruvoylglucosamine reductase (304 aa).

Residues 33-198 enclose the FAD-binding PCMH-type domain; the sequence is IGGPADLLVM…LEVVLALQEG (166 aa). The active site involves R177. S227 acts as the Proton donor in catalysis. E297 is an active-site residue.

The protein belongs to the MurB family. FAD is required as a cofactor.

The protein resides in the cytoplasm. It catalyses the reaction UDP-N-acetyl-alpha-D-muramate + NADP(+) = UDP-N-acetyl-3-O-(1-carboxyvinyl)-alpha-D-glucosamine + NADPH + H(+). It participates in cell wall biogenesis; peptidoglycan biosynthesis. In terms of biological role, cell wall formation. This is UDP-N-acetylenolpyruvoylglucosamine reductase from Alkaliphilus metalliredigens (strain QYMF).